A 119-amino-acid polypeptide reads, in one-letter code: Ribonuclease P protein component (119 aa).

This sequence belongs to the RnpA family. As to quaternary structure, consists of a catalytic RNA component (M1 or rnpB) and a protein subunit.

The catalysed reaction is Endonucleolytic cleavage of RNA, removing 5'-extranucleotides from tRNA precursor.. Its function is as follows. RNaseP catalyzes the removal of the 5'-leader sequence from pre-tRNA to produce the mature 5'-terminus. It can also cleave other RNA substrates such as 4.5S RNA. The protein component plays an auxiliary but essential role in vivo by binding to the 5'-leader sequence and broadening the substrate specificity of the ribozyme. The chain is Ribonuclease P protein component from Mycolicibacterium paratuberculosis (strain ATCC BAA-968 / K-10) (Mycobacterium paratuberculosis).